Reading from the N-terminus, the 550-residue chain is Acetyl-coenzyme A transporter 1 (550 aa).

Composition is skewed to basic and acidic residues over residues 1 to 12 and 36 to 52; these read MSPTISHKDSSR and DDSRRDSVGGEGDREVL. The tract at residues 1-58 is disordered; it reads MSPTISHKDSSRQRRSGMFSHALDMKSGPLPPGGWDDSRRDSVGGEGDREVLLGDAGP. Residues 1-74 lie on the Cytoplasmic side of the membrane; sequence MSPTISHKDS…PRSYRSELSS (74 aa). Position 42 is a phosphoserine (Ser-42). A helical transmembrane segment spans residues 75–95; that stretch reads ILLLLFLYVLQGIPLGLAGSI. Residues 96–113 are Extracellular-facing; the sequence is PLILQSKNVSYTDQAFFS. Asn-103 carries an N-linked (GlcNAc...) asparagine glycan. A helical transmembrane segment spans residues 114–134; it reads FVFWPFSLKLLWAPLVDAVYF. The Cytoplasmic portion of the chain corresponds to 135–141; the sequence is KNFGRRK. A helical transmembrane segment spans residues 142-162; it reads SWLVPTQYTLGIFMIYLSTQV. Over 163 to 175 the chain is Extracellular; the sequence is DRLLGNIDGRTPD. A helical transmembrane segment spans residues 176-196; the sequence is VVALTVTFFLFEFLAATQDIA. Residues 197-217 lie on the Cytoplasmic side of the membrane; sequence VDGWALTMLSRENVGYASTCN. A helical membrane pass occupies residues 218–238; sequence SVGQTAGYFLGNVLFLALESA. The Extracellular portion of the chain corresponds to 239–256; that stretch reads DFCNKYLRFQPQPRGIVT. The chain crosses the membrane as a helical span at residues 257–277; it reads LSDFLFFWGTVFLITTTLVAL. The Cytoplasmic portion of the chain corresponds to 278 to 300; it reads LKKENREASIVKEETQGITDTYK. The chain crosses the membrane as a helical span at residues 301–321; the sequence is LLFSIIKMPAVLAFCLLILTS. Over 322–344 the chain is Extracellular; it reads KIGFSAADAVTGLKLVEEGVPKE. Residues 345 to 365 traverse the membrane as a helical segment; it reads HLALLAVPMVPLQIILPLLIS. At 366 to 375 the chain is on the cytoplasmic side; the sequence is KYTAGPQPLN. The chain crosses the membrane as a helical span at residues 376–396; the sequence is IFYKAMPYRLLLGLEYALLVW. At 397 to 405 the chain is on the extracellular side; that stretch reads WTPKVEHQG. The helical transmembrane segment at 406 to 426 threads the bilayer; that stretch reads GFPLYYYIIVLLSYALHQVTL. The Cytoplasmic portion of the chain corresponds to 427-509; that stretch reads YSMYVSIMAF…LGGSCVTALD (83 aa). A helical transmembrane segment spans residues 510-530; the sequence is GYYVESIICVLIGFGWWFFLG. The Extracellular segment spans residues 531–550; sequence PKFKKLQDEGPSSWKCKRNN.

This sequence belongs to the SLC33A transporter family. As to quaternary structure, homodimerizes. Expressed in all adult tissues examined including brain, heart, kidney, liver and spleen, with maximum expression in liver and kidney.

It localises to the endoplasmic reticulum membrane. The enzyme catalyses acetyl-CoA(in) = acetyl-CoA(out). Its function is as follows. Acetyl-CoA transporter that mediates active acetyl-CoA import through the endoplasmic reticulum (ER) membrane into the ER lumen where specific ER-based acetyl-CoA:lysine acetyltransferases are responsible for the acetylation of ER-based protein substrate, such as BACE1. Necessary for O-acetylation of gangliosides. The chain is Acetyl-coenzyme A transporter 1 (Slc33a1) from Mus musculus (Mouse).